A 1110-amino-acid chain; its full sequence is Error-prone DNA polymerase (1110 aa).

The segment at 1072-1110 is disordered; the sequence is LGELHEPLNDDRREHPDNPAQRIRHPRDVRILPPSRDFH. 2 stretches are compositionally biased toward basic and acidic residues: residues 1073–1088 and 1097–1110; these read GELH…EHPD and PRDV…RDFH.

This sequence belongs to the DNA polymerase type-C family. DnaE2 subfamily.

The protein localises to the cytoplasm. The catalysed reaction is DNA(n) + a 2'-deoxyribonucleoside 5'-triphosphate = DNA(n+1) + diphosphate. Its function is as follows. DNA polymerase involved in damage-induced mutagenesis and translesion synthesis (TLS). It is not the major replicative DNA polymerase. The polypeptide is Error-prone DNA polymerase (Rhodopseudomonas palustris (strain BisB5)).